The chain runs to 256 residues: Pyridoxine 5'-phosphate synthase (256 aa).

Asn10 contacts 3-amino-2-oxopropyl phosphate. Position 12–13 (12–13) interacts with 1-deoxy-D-xylulose 5-phosphate; it reads DH. Arg21 contributes to the 3-amino-2-oxopropyl phosphate binding site. His46 acts as the Proton acceptor in catalysis. 1-deoxy-D-xylulose 5-phosphate-binding residues include Arg48 and His53. Glu73 serves as the catalytic Proton acceptor. Thr103 contacts 1-deoxy-D-xylulose 5-phosphate. Catalysis depends on His193, which acts as the Proton donor. Residues Gly194 and 215 to 216 contribute to the 3-amino-2-oxopropyl phosphate site; that span reads GH.

Belongs to the PNP synthase family. In terms of assembly, homooctamer; tetramer of dimers.

Its subcellular location is the cytoplasm. The catalysed reaction is 3-amino-2-oxopropyl phosphate + 1-deoxy-D-xylulose 5-phosphate = pyridoxine 5'-phosphate + phosphate + 2 H2O + H(+). The protein operates within cofactor biosynthesis; pyridoxine 5'-phosphate biosynthesis; pyridoxine 5'-phosphate from D-erythrose 4-phosphate: step 5/5. In terms of biological role, catalyzes the complicated ring closure reaction between the two acyclic compounds 1-deoxy-D-xylulose-5-phosphate (DXP) and 3-amino-2-oxopropyl phosphate (1-amino-acetone-3-phosphate or AAP) to form pyridoxine 5'-phosphate (PNP) and inorganic phosphate. The chain is Pyridoxine 5'-phosphate synthase from Zymomonas mobilis subsp. mobilis (strain ATCC 31821 / ZM4 / CP4).